Here is a 166-residue protein sequence, read N- to C-terminus: Large ribosomal subunit protein uL10 (166 aa).

Belongs to the universal ribosomal protein uL10 family. In terms of assembly, part of the ribosomal stalk of the 50S ribosomal subunit. The N-terminus interacts with L11 and the large rRNA to form the base of the stalk. The C-terminus forms an elongated spine to which L12 dimers bind in a sequential fashion forming a multimeric L10(L12)X complex.

Forms part of the ribosomal stalk, playing a central role in the interaction of the ribosome with GTP-bound translation factors. This Streptococcus pneumoniae (strain ATCC 700669 / Spain 23F-1) protein is Large ribosomal subunit protein uL10.